Consider the following 348-residue polypeptide: NADH-ubiquinone oxidoreductase chain 2 (348 aa).

10 helical membrane-spanning segments follow: residues 1–21 (MSPY…TITF), 25–45 (SWLM…PLMV), 60–80 (FLTQ…NAWM), 93–115 (LSAP…HFWL), 149–169 (LNTT…GLGG), 177–197 (KVLA…IQYS), 200–220 (LALL…LTLM), 239–259 (IATM…PLTG), 274–294 (NLPA…FFYL), and 326–346 (LAML…MVAI).

Belongs to the complex I subunit 2 family.

The protein localises to the mitochondrion inner membrane. It carries out the reaction a ubiquinone + NADH + 5 H(+)(in) = a ubiquinol + NAD(+) + 4 H(+)(out). Its function is as follows. Core subunit of the mitochondrial membrane respiratory chain NADH dehydrogenase (Complex I) that is believed to belong to the minimal assembly required for catalysis. Complex I functions in the transfer of electrons from NADH to the respiratory chain. The immediate electron acceptor for the enzyme is believed to be ubiquinone. The sequence is that of NADH-ubiquinone oxidoreductase chain 2 (MT-ND2) from Latimeria chalumnae (Coelacanth).